The sequence spans 297 residues: Homoserine kinase (297 aa).

Residue 84–94 (PLSKGFGSSAA) participates in ATP binding.

It belongs to the GHMP kinase family. Homoserine kinase subfamily.

It localises to the cytoplasm. It carries out the reaction L-homoserine + ATP = O-phospho-L-homoserine + ADP + H(+). The protein operates within amino-acid biosynthesis; L-threonine biosynthesis; L-threonine from L-aspartate: step 4/5. Functionally, catalyzes the ATP-dependent phosphorylation of L-homoserine to L-homoserine phosphate. This is Homoserine kinase from Shouchella clausii (strain KSM-K16) (Alkalihalobacillus clausii).